Consider the following 541-residue polypeptide: Chaperonin GroEL (541 aa).

ATP is bound by residues 29-32, 86-90, Gly413, 477-479, and Asp493; these read TLGP, DGTTT, and DAL.

This sequence belongs to the chaperonin (HSP60) family. In terms of assembly, forms a cylinder of 14 subunits composed of two heptameric rings stacked back-to-back. Interacts with the co-chaperonin GroES.

The protein localises to the cytoplasm. The enzyme catalyses ATP + H2O + a folded polypeptide = ADP + phosphate + an unfolded polypeptide.. In terms of biological role, together with its co-chaperonin GroES, plays an essential role in assisting protein folding. The GroEL-GroES system forms a nano-cage that allows encapsulation of the non-native substrate proteins and provides a physical environment optimized to promote and accelerate protein folding. The sequence is that of Chaperonin GroEL from Clostridium botulinum (strain 657 / Type Ba4).